Here is a 300-residue protein sequence, read N- to C-terminus: Inosose dehydratase (300 aa).

It belongs to the IolE/MocC family. Glutathione is required as a cofactor. Requires Co(2+) as cofactor. The cofactor is Mn(2+).

It catalyses the reaction scyllo-inosose = 3D-3,5/4-trihydroxycyclohexane-1,2-dione + H2O. It participates in polyol metabolism; myo-inositol degradation into acetyl-CoA; acetyl-CoA from myo-inositol: step 2/7. Its function is as follows. Catalyzes the dehydration of inosose (2-keto-myo-inositol, 2KMI or 2,4,6/3,5-pentahydroxycyclohexanone) to 3D-(3,5/4)-trihydroxycyclohexane-1,2-dione (D-2,3-diketo-4-deoxy-epi-inositol). The chain is Inosose dehydratase from Bacillus licheniformis (strain ATCC 14580 / DSM 13 / JCM 2505 / CCUG 7422 / NBRC 12200 / NCIMB 9375 / NCTC 10341 / NRRL NRS-1264 / Gibson 46).